A 283-amino-acid chain; its full sequence is Pantothenate synthetase (283 aa).

Met30–His37 is an ATP binding site. His37 functions as the Proton donor in the catalytic mechanism. Residue Gln61 participates in (R)-pantoate binding. Gln61 contributes to the beta-alanine binding site. Gly149 to Asp152 contacts ATP. Gln155 is a binding site for (R)-pantoate. ATP contacts are provided by residues Val178 and Leu186–Arg189.

Belongs to the pantothenate synthetase family. Homodimer.

Its subcellular location is the cytoplasm. The enzyme catalyses (R)-pantoate + beta-alanine + ATP = (R)-pantothenate + AMP + diphosphate + H(+). It participates in cofactor biosynthesis; (R)-pantothenate biosynthesis; (R)-pantothenate from (R)-pantoate and beta-alanine: step 1/1. Functionally, catalyzes the condensation of pantoate with beta-alanine in an ATP-dependent reaction via a pantoyl-adenylate intermediate. The polypeptide is Pantothenate synthetase (Pseudomonas fluorescens (strain SBW25)).